Here is a 129-residue protein sequence, read N- to C-terminus: uncharacterized protein (129 aa).

A compositionally biased stretch (low complexity) spans M1–P13. Residues M1–E129 are disordered. Residues I34–A94 show a composition bias toward basic and acidic residues. Positions V117–E129 are enriched in low complexity.

This is an uncharacterized protein from Caenorhabditis elegans.